Reading from the N-terminus, the 988-residue chain is uncharacterized protein (988 aa).

An N-terminal signal peptide occupies residues Met1–Leu17. Positions Tyr111–Ser176 are disordered. Over residues Pro114–Thr140 the composition is skewed to low complexity. 4 N-linked (GlcNAc...) asparagine glycosylation sites follow: Asn247, Asn389, Asn529, and Asn601. The chain crosses the membrane as a helical span at residues Ile690–Leu710. The N-linked (GlcNAc...) asparagine glycan is linked to Asn720. The next 6 helical transmembrane spans lie at Leu721 to Ile741, Leu753 to Ile773, Val784 to Leu804, Met832 to Leu852, Leu864 to Ile884, and Thr891 to Gly911. The interval Arg966–Pro988 is disordered. Asn974 carries an N-linked (GlcNAc...) asparagine glycan.

Its subcellular location is the membrane. This is an uncharacterized protein from Caenorhabditis elegans.